The following is a 233-amino-acid chain: Ribonuclease 3 (233 aa).

In terms of domain architecture, RNase III spans 6-135; that stretch reads QDYLAKEFNI…FIGALYLDQG (130 aa). A Mg(2+)-binding site is contributed by E48. Residue D52 is part of the active site. Residues D121 and E124 each coordinate Mg(2+). Residue E124 is part of the active site. Residues 161–230 form the DRBM domain; it reads DAKTSLQEFL…AQQALDNMRN (70 aa). The tract at residues 205 to 233 is disordered; the sequence is IGEGKGSSKKHAEMQAAQQALDNMRNKNK.

Belongs to the ribonuclease III family. In terms of assembly, homodimer. Requires Mg(2+) as cofactor.

The protein localises to the cytoplasm. It carries out the reaction Endonucleolytic cleavage to 5'-phosphomonoester.. Functionally, digests double-stranded RNA. Involved in the processing of primary rRNA transcript to yield the immediate precursors to the large and small rRNAs (23S and 16S). Processes some mRNAs, and tRNAs when they are encoded in the rRNA operon. Processes pre-crRNA and tracrRNA of type II CRISPR loci if present in the organism. The sequence is that of Ribonuclease 3 from Limosilactobacillus reuteri (strain DSM 20016) (Lactobacillus reuteri).